Reading from the N-terminus, the 516-residue chain is Flagellar radial spoke protein 3 (516 aa).

2 stretches are compositionally biased toward polar residues: residues 1 to 11 (MVQAKAQQQLY) and 62 to 74 (ATQT…SPAS). Disordered stretches follow at residues 1-32 (MVQA…EDET), 60-90 (ADAT…TPEA), 388-412 (NAKW…AAEE), and 424-447 (AAAE…DGVE). Basic and acidic residues predominate over residues 391–412 (WEADKAEAAEKARAEAEAAAEE).

The protein belongs to the flagellar radial spoke RSP3 family. In terms of assembly, interacts with FAP91. Protein 3 is one of the 5 radial spoke proteins that are phosphorylated. Post-translationally, protein 3a might only differ from protein 3 in being unphosphorylated.

Its subcellular location is the cytoplasm. The protein resides in the cytoskeleton. It localises to the flagellum axoneme. Functionally, protein 3 may attach the radial spoke to the outer doublet microtubule or is required to form a stable spoke structure. Flagellar radial spokes contribute to the regulation of dynein arm activity and thus the pattern of flagellar bending. They consist of a thin stalk, which is attached to the a subfiber of the outer doublet microtubule, and a bulbous head, which is attached to the stalk and appears to interact with the projections from the central pair of microtubules. This is Flagellar radial spoke protein 3 from Chlamydomonas reinhardtii (Chlamydomonas smithii).